Here is a 427-residue protein sequence, read N- to C-terminus: C4-dicarboxylate TRAP transporter large permease protein DctM (427 aa).

The next 13 helical transmembrane spans lie at 2–22 (TILF…PIAV), 55–75 (TLLA…GGVA), 91–111 (GGLA…SGSS), 115–135 (VAAV…PQAF), 138–158 (GIVC…VMVV), 171–191 (FIAG…VIYI), 216–236 (ALWG…GAFT), 237–257 (PTEA…FVYR), 274–294 (LTIM…VLTT), 310–330 (LSPW…GNFM), 335–355 (IILI…IDPI), 359–379 (IIMV…LNLF), and 396–416 (ALPW…IPAV).

This sequence belongs to the TRAP transporter large permease family. As to quaternary structure, the complex comprises the extracytoplasmic solute receptor protein DctP, and the two transmembrane proteins DctQ and DctM.

The protein localises to the cell inner membrane. Part of the tripartite ATP-independent periplasmic (TRAP) transport system DctPQM involved in C4-dicarboxylates uptake. This chain is C4-dicarboxylate TRAP transporter large permease protein DctM, found in Pseudomonas aeruginosa (strain ATCC 15692 / DSM 22644 / CIP 104116 / JCM 14847 / LMG 12228 / 1C / PRS 101 / PAO1).